We begin with the raw amino-acid sequence, 945 residues long: Protein translocase subunit SecA (945 aa).

ATP contacts are provided by residues Gln90, 108–112 (GEGKT), and Asp509. The disordered stretch occupies residues 533 to 568 (VKPEDGHKPPVPLQRRSESSGFGEDKDVTTDNSKPL). The span at 547-561 (RRSESSGFGEDKDVT) shows a compositional bias: basic and acidic residues.

This sequence belongs to the SecA family. Monomer and homodimer. Part of the essential Sec protein translocation apparatus which comprises SecA, SecYEG and auxiliary proteins SecDF. Other proteins may also be involved.

It localises to the cell inner membrane. It is found in the cellular thylakoid membrane. Its subcellular location is the cytoplasm. It catalyses the reaction ATP + H2O + cellular proteinSide 1 = ADP + phosphate + cellular proteinSide 2.. Functionally, part of the Sec protein translocase complex. Interacts with the SecYEG preprotein conducting channel. Has a central role in coupling the hydrolysis of ATP to the transfer of proteins into and across the cell membrane, serving as an ATP-driven molecular motor driving the stepwise translocation of polypeptide chains across the membrane. Probably participates in protein translocation into and across both the cytoplasmic and thylakoid membranes in cyanobacterial cells. The chain is Protein translocase subunit SecA from Prochlorococcus marinus (strain MIT 9211).